The sequence spans 976 residues: Ephrin type-A receptor 2 (976 aa).

The signal sequence occupies residues 1–23 (MELWAARACFVLLWGCALAPATA). Residues 1-206 (MELWAARACF…YYKKCPELLQ (206 aa)) form a mediates interaction with CLDN4 region. Over 25 to 537 (QGKEVVLLDF…SPEGSGSLAV (513 aa)) the chain is Extracellular. The 179-residue stretch at 28-206 (EVVLLDFAAA…YYKKCPELLQ (179 aa)) folds into the Eph LBD domain. 2 cysteine pairs are disulfide-bonded: C70-C188 and C105-C115. Residues 328-432 (PPSAPHYLTA…TSRSFRTASV (105 aa)) form the Fibronectin type-III 1 domain. N-linked (GlcNAc...) asparagine glycans are attached at residues N407 and N435. The 92-residue stretch at 438 to 529 (EPPKVRLEGR…KVHEFQTLSP (92 aa)) folds into the Fibronectin type-III 2 domain. Residues 538–558 (IGGVAVCVVLLLLLAGAGFFI) form a helical membrane-spanning segment. Topologically, residues 559–976 (HRRRKNLRAR…DQVNTVGIPI (418 aa)) are cytoplasmic. Residue S570 is modified to Phosphoserine. The residue at position 575 (Y575) is a Phosphotyrosine. Phosphoserine is present on S579. Phosphotyrosine; by autocatalysis is present on Y588. Position 594 is a phosphotyrosine (Y594). Positions 606-906 (TEIHPSCVTR…STSGSEGVPF (301 aa)) are mediates interaction with ARHGEF16. Positions 613–875 (VTRQKVIGAG…DIVSILDKLI (263 aa)) constitute a Protein kinase domain. 619 to 627 (IGAGEFGEV) lines the ATP pocket. Y628 bears the Phosphotyrosine mark. Residue K646 coordinates ATP. T647 carries the phosphothreonine modification. Position 735 is a phosphotyrosine; by autocatalysis (Y735). D739 serves as the catalytic Proton acceptor. Y772 carries the post-translational modification Phosphotyrosine. Phosphoserine occurs at positions 869, 892, 897, and 901. The interval 886–976 (DFDPRVSIRL…DQVNTVGIPI (91 aa)) is negatively regulates interaction with ARHGEF16. One can recognise an SAM domain in the interval 904-968 (VPFRTVSEWL…AYSLLGLKDQ (65 aa)). Y921 is subject to Phosphotyrosine; by autocatalysis. At Y930 the chain carries Phosphotyrosine. Positions 974–976 (IPI) match the PDZ-binding motif.

It belongs to the protein kinase superfamily. Tyr protein kinase family. Ephrin receptor subfamily. As to quaternary structure, homodimer. Interacts with SLA. Interacts (phosphorylated form) with VAV2, VAV3 and PI3-kinase p85 subunit (PIK3R1, PIK3R2 or PIK3R3); critical for the EFNA1-induced activation of RAC1 which stimulates cell migration. Interacts with INPPL1; regulates activated EPHA2 endocytosis and degradation. Interacts (inactivated form) with PTK2/FAK1 and interacts (EFNA1 ligand-activated form) with PTPN11; regulates integrin-mediated adhesion. Interacts with ARHGEF16, DOCK4 and ELMO2; mediates ligand-independent activation of RAC1 which stimulates cell migration. Interacts with CLDN4; phosphorylates CLDN4 and may regulate tight junctions. Interacts with ACP1. Interacts with ANKS1A. Interacts with CEMIP. Interacts with NCK1; may regulate EPHA2 activity in cell migration and adhesion. Interacts with TIMD4. Autophosphorylates. Phosphorylated on tyrosine upon binding and activation by EFNA1. Phosphorylated residues Tyr-588 and Tyr-594 are required for binding VAV2 and VAV3 while phosphorylated residues Tyr-735 and Tyr-930 are required for binding PI3-kinase p85 subunit (PIK3R1, PIK3R2 or PIK3R3). These phosphorylated residues are critical for recruitment of VAV2 and VAV3 and PI3-kinase p85 subunit which transduce downstream signaling to activate RAC1 GTPase and cell migration. Dephosphorylation of Tyr-930 by PTPRF prevents the interaction of EPHA2 with NCK1. Phosphorylated at Ser-897 by PKB; serum-induced phosphorylation which targets EPHA2 to the cell leading edge and stimulates cell migration. Phosphorylation by PKB is inhibited by EFNA1-activated EPHA2 which regulates PKB activity via a reciprocal regulatory loop. Phosphorylated at Ser-897 in response to TNF by RPS6KA1 and RPS6KA3; RPS6KA-EPHA2 signaling pathway controls cell migration. Phosphorylated at Ser-897 by PKA; blocks cell retraction induced by EPHA2 kinase activity. Dephosphorylated by ACP1. Post-translationally, ubiquitinated by CHIP/STUB1. Ubiquitination is regulated by the HSP90 chaperone and regulates the receptor stability and activity through proteasomal degradation. ANKS1A prevents ubiquitination and degradation.

It is found in the cell membrane. It localises to the cell projection. Its subcellular location is the ruffle membrane. The protein resides in the lamellipodium membrane. The protein localises to the cell junction. It is found in the focal adhesion. The catalysed reaction is L-tyrosyl-[protein] + ATP = O-phospho-L-tyrosyl-[protein] + ADP + H(+). Functionally, receptor tyrosine kinase which binds promiscuously membrane-bound ephrin-A family ligands residing on adjacent cells, leading to contact-dependent bidirectional signaling into neighboring cells. The signaling pathway downstream of the receptor is referred to as forward signaling while the signaling pathway downstream of the ephrin ligand is referred to as reverse signaling. Activated by the ligand ephrin-A1/EFNA1 regulates migration, integrin-mediated adhesion, proliferation and differentiation of cells. Regulates cell adhesion and differentiation through DSG1/desmoglein-1 and inhibition of the ERK1/ERK2 signaling pathway. May also participate in UV radiation-induced apoptosis and have a ligand-independent stimulatory effect on chemotactic cell migration. During development, may function in distinctive aspects of pattern formation and subsequently in development of several fetal tissues. Involved for instance in angiogenesis, in early hindbrain development and epithelial proliferation and branching morphogenesis during mammary gland development. Engaged by the ligand ephrin-A5/EFNA5 may regulate lens fiber cells shape and interactions and be important for lens transparency development and maintenance. With ephrin-A2/EFNA2 may play a role in bone remodeling through regulation of osteoclastogenesis and osteoblastogenesis. The sequence is that of Ephrin type-A receptor 2 (EPHA2) from Macaca fascicularis (Crab-eating macaque).